A 550-amino-acid polypeptide reads, in one-letter code: NAD(P)H-quinone oxidoreductase chain 4 3 (550 aa).

14 helical membrane passes run 5 to 25 (FPWL…IPLL), 36 to 56 (YALI…WQHF), 86 to 106 (ISAP…FSAW), 114 to 134 (LFYA…VAKD), 135 to 155 (LFLF…LVCI), 168 to 188 (FLLY…ALSL), 212 to 232 (MWLY…FPLH), 243 to 263 (SSPV…YGLM), 277 to 297 (FAPL…FSSF), 311 to 331 (VSHM…GING), 332 to 352 (AMLQ…LAGV), 375 to 395 (VFAM…MSGF), 418 to 438 (ITVF…LSML), and 489 to 509 (IFIA…PKLL).

The protein belongs to the complex I subunit 4 family.

The protein localises to the cellular thylakoid membrane. The enzyme catalyses a plastoquinone + NADH + (n+1) H(+)(in) = a plastoquinol + NAD(+) + n H(+)(out). It carries out the reaction a plastoquinone + NADPH + (n+1) H(+)(in) = a plastoquinol + NADP(+) + n H(+)(out). In terms of biological role, NDH-1 shuttles electrons from NAD(P)H, via FMN and iron-sulfur (Fe-S) centers, to quinones in the respiratory chain. The immediate electron acceptor for the enzyme in this species is believed to be plastoquinone. Couples the redox reaction to proton translocation (for every two electrons transferred, four hydrogen ions are translocated across the cytoplasmic membrane), and thus conserves the redox energy in a proton gradient. This chain is NAD(P)H-quinone oxidoreductase chain 4 3, found in Picosynechococcus sp. (strain ATCC 27264 / PCC 7002 / PR-6) (Agmenellum quadruplicatum).